Here is a 673-residue protein sequence, read N- to C-terminus: NADH-quinone oxidoreductase chain 3 (673 aa).

A 2Fe-2S ferredoxin-type domain is found at Arg-5–Met-90. The [2Fe-2S] cluster site is built by Cys-37, Cys-48, Cys-51, and Cys-66. A 4Fe-4S His(Cys)3-ligated-type domain is found at Met-90–Gly-129. His-106, Cys-110, Cys-113, Cys-119, Cys-158, Cys-161, Cys-164, and Cys-208 together coordinate [4Fe-4S] cluster. The 57-residue stretch at Leu-227–Arg-283 folds into the 4Fe-4S Mo/W bis-MGD-type domain.

It belongs to the complex I 75 kDa subunit family. As to quaternary structure, NDH-1 is composed of at least 14 different subunits, Nqo1 to Nqo14. The complex has a L-shaped structure, with the hydrophobic arm (subunits Nqo7, Nqo8, Nqo10 to Nqo14) embedded in the inner membrane and the hydrophilic peripheral arm (subunits Nqo1 to Nqo6, Nqo9) protruding into the bacterial cytoplasm. The hydrophilic domain contains all the redox centers. The cofactor is [2Fe-2S] cluster. [4Fe-4S] cluster is required as a cofactor.

Its subcellular location is the cell inner membrane. It carries out the reaction a quinone + NADH + 5 H(+)(in) = a quinol + NAD(+) + 4 H(+)(out). In terms of biological role, NDH-1 shuttles electrons from NADH, via FMN and iron-sulfur (Fe-S) centers, to quinones in the respiratory chain. The immediate electron acceptor for the enzyme in this species is believed to be ubiquinone. Couples the redox reaction to proton translocation (for every two electrons transferred, four hydrogen ions are translocated across the cytoplasmic membrane), and thus conserves the redox energy in a proton gradient. This is NADH-quinone oxidoreductase chain 3 from Paracoccus denitrificans.